The following is a 367-amino-acid chain: Probable glutamine synthetase (367 aa).

In terms of domain architecture, GS beta-grasp spans 30–110 (IQATYVWIDG…VMCDTLDHQM (81 aa)). One can recognise a GS catalytic domain in the interval 117–367 (HRQACAEIMH…TAMIAQSILF (251 aa)).

Belongs to the glutamine synthetase family. In terms of assembly, homooctamer.

It is found in the cytoplasm. It catalyses the reaction L-glutamate + NH4(+) + ATP = L-glutamine + ADP + phosphate + H(+). This Caenorhabditis elegans protein is Probable glutamine synthetase (gln-2).